A 100-amino-acid polypeptide reads, in one-letter code: Small ribosomal subunit protein uS14c (100 aa).

The protein belongs to the universal ribosomal protein uS14 family. Part of the 30S ribosomal subunit.

It localises to the plastid. The protein resides in the chloroplast. Functionally, binds 16S rRNA, required for the assembly of 30S particles. The polypeptide is Small ribosomal subunit protein uS14c (Anthoceros angustus (Hornwort)).